The chain runs to 1116 residues: Electrogenic sodium bicarbonate cotransporter 4 (1116 aa).

The span at 1–14 shows a compositional bias: basic and acidic residues; the sequence is MKVDEEKAGVKKLD. Disordered stretches follow at residues 1–92, 222–257, and 431–467; these read MKVD…TRSP, PIHRSLADIGKSVSTTNRSSARSSSAGPTLHRSTED, and PGQMNGSVGGGGASAGGGGSGGGAGGSGAGGVGSGDE. Over 1 to 515 the chain is Cytoplasmic; sequence MKVDEEKAGV…YDGFHLQSIS (515 aa). Over residues 233-247 the composition is skewed to low complexity; sequence SVSTTNRSSARSSSA. The segment covering 437–464 has biased composition (gly residues); sequence SVGGGGASAGGGGSGGGAGGSGAGGVGS. The chain crosses the membrane as a helical span at residues 516 to 536; it reads AVLFIYLGCITNAITFGGLLG. Residues 537–558 are Extracellular-facing; sequence DATDNYQGVMESFLGTAMAGSL. A helical membrane pass occupies residues 559–579; it reads FCLFSGQPLIILSSTGPILIF. Topologically, residues 580–600 are cytoplasmic; the sequence is EKLLFDFSKANGLDYMEFRLW. Residues 601–621 traverse the membrane as a helical segment; sequence IGLHSAIQCLILVATDASFII. Topologically, residues 622–631 are extracellular; it reads KYITRFTEEG. A helical membrane pass occupies residues 632-652; it reads FSTLISFIFIYDAIKKMIGAF. The Cytoplasmic portion of the chain corresponds to 653 to 730; the sequence is KYYPINTDFK…GGRLLGSSCQ (78 aa). Residues 731–751 form a helical membrane-spanning segment; sequence FVPDLALMSFILFFGTYSMTL. Topologically, residues 752–768 are extracellular; that stretch reads TLKKFKFSRYFPTKVRT. The chain crosses the membrane as a helical span at residues 769–789; sequence LVADFSIVFSILLFCGIDACF. Topologically, residues 790 to 819 are cytoplasmic; the sequence is GLQTPKLHVPSVIKPTRPDRGWFVAPFGKN. The helical transmembrane segment at 820 to 840 threads the bilayer; it reads PWWVYPASILPALLVTILIFM. The Extracellular segment spans residues 841–865; that stretch reads DQQITAVIVNRKENKLRKAAGYHLD. Residues 866 to 886 form a helical membrane-spanning segment; the sequence is LFWVGILMALCSFTGLPWYVA. Topologically, residues 887–922 are cytoplasmic; sequence ATVISIAHIDSLKMETETSAPGEQPQFLGVREQRVT. A helical transmembrane segment spans residues 923 to 943; it reads GVMVFILTGISVFLAPILKYI. Residues 944–945 are Extracellular-facing; that stretch reads PM. A helical membrane pass occupies residues 946–966; it reads PVLYGVFLYMGVASLNGIQFW. Topologically, residues 967 to 987 are cytoplasmic; that stretch reads ERCKLFLMPAKHQPDHAFLRH. 2 consecutive transmembrane segments (helical) span residues 988-1008 and 1009-1029; these read VPLRRIHLFTLVQILCLALLW and ILKSTMAAIIFPVMILGLIIV. Over 1030-1116 the chain is Cytoplasmic; it reads RRLLDLIFSQ…KRSSSWSYSL (87 aa).

It belongs to the anion exchanger (TC 2.A.31) family.

The protein localises to the apical cell membrane. The protein resides in the basolateral cell membrane. The catalysed reaction is 2 hydrogencarbonate(out) + Na(+)(out) = 2 hydrogencarbonate(in) + Na(+)(in). The enzyme catalyses 3 hydrogencarbonate(out) + Na(+)(out) = 3 hydrogencarbonate(in) + Na(+)(in). Functionally, mediates sodium- and bicarbonate-dependent electrogenic sodium bicarbonate cotransport, with a Na(+):HCO3(-) stoichiometry varying from 1:2 to 1:3. The chain is Electrogenic sodium bicarbonate cotransporter 4 (Slc4a5) from Mus musculus (Mouse).